Here is an 89-residue protein sequence, read N- to C-terminus: UPF0297 protein lp_2275 (89 aa).

This sequence belongs to the UPF0297 family.

The protein is UPF0297 protein lp_2275 of Lactiplantibacillus plantarum (strain ATCC BAA-793 / NCIMB 8826 / WCFS1) (Lactobacillus plantarum).